Here is a 320-residue protein sequence, read N- to C-terminus: Malate dehydrogenase (320 aa).

NAD(+) is bound by residues 10 to 15 and Asp34; that span reads GAGQIG. Residues Arg83 and Arg89 each contribute to the substrate site. NAD(+) contacts are provided by residues Asn96 and 119-121; that span reads ITN. Substrate is bound by residues Asn121 and Arg152. His176 functions as the Proton acceptor in the catalytic mechanism.

It belongs to the LDH/MDH superfamily. MDH type 3 family.

It catalyses the reaction (S)-malate + NAD(+) = oxaloacetate + NADH + H(+). Functionally, catalyzes the reversible oxidation of malate to oxaloacetate. This is Malate dehydrogenase from Jannaschia sp. (strain CCS1).